Reading from the N-terminus, the 482-residue chain is MASFSAETNSTDLLSQPWNEPPVILSMVILSLTFLLGLPGNGLVLWVAGLKMQRTVNTVWFLHLTLADLLCCLSLPFSLAHLALQGQWPYGRFLCELIPSIIVLNMFASVFLLTAISLDRCLVVFKPIWCQNHRNVGTACSICGCIWVVAFVMCIPVFVYREIFTADNHNRCGYKFGLSSSLDYPDFYGDPLENRSLENIVQLPGEMNDRLDPSSFQTNDHPWTVPTVFQPQTFQRPSADSLHRDSARLTSQNLYSNVFKPADVVSPKIPSGFPIKDQETSPLDNSDAFLSTHLKLFPSASSNSFYESELPQDFQDYYNLGQFEDDNQVPTPLVAITITRLVVGFLLPSVIMIACYSFIVFRMQRGRFAKSQSKTFRVAVVVVAVFLVCWTPYHIFGVLSLLIDPESPLGKTLMSWDHVSIALASANSCFNPFLYALLGKDFRKKARQSIQGILEAAFSEELTRSTHCNSNNVFSERNSTTV.

Over 1–23 (MASFSAETNSTDLLSQPWNEPPV) the chain is Extracellular. N9 carries N-linked (GlcNAc...) asparagine glycosylation. The chain crosses the membrane as a helical span at residues 24–46 (ILSMVILSLTFLLGLPGNGLVLW). Residues 47–57 (VAGLKMQRTVN) lie on the Cytoplasmic side of the membrane. A helical membrane pass occupies residues 58-80 (TVWFLHLTLADLLCCLSLPFSLA). The Extracellular segment spans residues 81–96 (HLALQGQWPYGRFLCE). Cysteines 95 and 172 form a disulfide. A helical membrane pass occupies residues 97–118 (LIPSIIVLNMFASVFLLTAISL). Residues 119-139 (DRCLVVFKPIWCQNHRNVGTA) are Cytoplasmic-facing. Residues 140 to 160 (CSICGCIWVVAFVMCIPVFVY) form a helical membrane-spanning segment. At 161-340 (REIFTADNHN…TPLVAITITR (180 aa)) the chain is on the extracellular side. Sulfotyrosine occurs at positions 174 and 184. A glycan (N-linked (GlcNAc...) asparagine) is linked at N194. Y318 bears the Sulfotyrosine mark. A helical membrane pass occupies residues 341–360 (LVVGFLLPSVIMIACYSFIV). The Cytoplasmic portion of the chain corresponds to 361–377 (FRMQRGRFAKSQSKTFR). The helical transmembrane segment at 378–400 (VAVVVVAVFLVCWTPYHIFGVLS) threads the bilayer. Residues 401–417 (LLIDPESPLGKTLMSWD) lie on the Extracellular side of the membrane. The chain crosses the membrane as a helical span at residues 418–438 (HVSIALASANSCFNPFLYALL). At 439–482 (GKDFRKKARQSIQGILEAAFSEELTRSTHCNSNNVFSERNSTTV) the chain is on the cytoplasmic side. Position 459 is a phosphoserine (S459). The residue at position 463 (T463) is a Phosphothreonine.

The protein belongs to the G-protein coupled receptor 1 family. In terms of assembly, interacts with VGF-derived peptide TLQP-21. Among the sulfation sites Tyr-174 is essential for binding of C3a anaphylatoxin.

It localises to the cell membrane. In terms of biological role, receptor for the chemotactic and inflammatory peptide anaphylatoxin C3a. This receptor stimulates chemotaxis, granule enzyme release and superoxide anion production. The sequence is that of C3a anaphylatoxin chemotactic receptor (C3AR1) from Pongo abelii (Sumatran orangutan).